We begin with the raw amino-acid sequence, 218 residues long: Fibroblast growth factor 15 (218 aa).

The signal sequence occupies residues 1 to 25; the sequence is MARKWNGRAVARALVLATLWLAVSG.

It belongs to the heparin-binding growth factors family. In terms of assembly, interacts with MALRD1. In terms of tissue distribution, expressed in the developing brain.

The protein localises to the secreted. Involved in the suppression of bile acid biosynthesis through down-regulation of CYP7A1 expression. This is Fibroblast growth factor 15 (Fgf15) from Mus musculus (Mouse).